The following is a 201-amino-acid chain: 3-isopropylmalate dehydratase small subunit (201 aa).

The protein belongs to the LeuD family. LeuD type 1 subfamily. As to quaternary structure, heterodimer of LeuC and LeuD.

It catalyses the reaction (2R,3S)-3-isopropylmalate = (2S)-2-isopropylmalate. The protein operates within amino-acid biosynthesis; L-leucine biosynthesis; L-leucine from 3-methyl-2-oxobutanoate: step 2/4. In terms of biological role, catalyzes the isomerization between 2-isopropylmalate and 3-isopropylmalate, via the formation of 2-isopropylmaleate. The polypeptide is 3-isopropylmalate dehydratase small subunit (Jannaschia sp. (strain CCS1)).